We begin with the raw amino-acid sequence, 272 residues long: D-aminoacyl-tRNA deacylase (272 aa).

It belongs to the DtdA deacylase family. As to quaternary structure, monomer. Zn(2+) is required as a cofactor.

The enzyme catalyses a D-aminoacyl-tRNA + H2O = a tRNA + a D-alpha-amino acid + H(+). It catalyses the reaction glycyl-tRNA(Ala) + H2O = tRNA(Ala) + glycine + H(+). Its function is as follows. D-aminoacyl-tRNA deacylase with broad substrate specificity. By recycling D-aminoacyl-tRNA to D-amino acids and free tRNA molecules, this enzyme counteracts the toxicity associated with the formation of D-aminoacyl-tRNA entities in vivo. The protein is D-aminoacyl-tRNA deacylase of Thermococcus kodakarensis (strain ATCC BAA-918 / JCM 12380 / KOD1) (Pyrococcus kodakaraensis (strain KOD1)).